A 338-amino-acid polypeptide reads, in one-letter code: 2-methyl-6-phytyl-1,4-hydroquinone methyltransferase, chloroplastic (338 aa).

The transit peptide at 1 to 51 (MASLMLNGAITFPKGLGSPGSNLHARSIPRPTLLSVTRTSTPRLSVATRCS) directs the protein to the chloroplast. Residues 52–307 (SSSVSSSRPS…VNNPFSFLGR (256 aa)) are Chloroplast intermembrane-facing. An SAM motif I region spans residues 114 to 123 (VVDVGGGTGF). Positions 159–172 (CKIVEGDAEDLPFP) are SAM motif II. The interval 200 to 213 (RVLKIGGKACLIGP) is SAM motif III. Residues 308-328 (FLLGTLAAAWFVLIPIYMWIK) form a helical membrane-spanning segment. Over 329–338 (DQIVPKDQPI) the chain is Stromal.

Belongs to the class I-like SAM-binding methyltransferase superfamily. MPBQ/MBSQ MT family.

It localises to the plastid. It is found in the chloroplast inner membrane. The catalysed reaction is 2-methyl-6-phytyl-1,4-benzene-1,4-diol + S-adenosyl-L-methionine = 2,3-dimethyl-6-phytylbenzene-1,4-diol + S-adenosyl-L-homocysteine + H(+). It catalyses the reaction 2-methyl-6-(all-trans-nonaprenyl)benzene-1,4-diol + S-adenosyl-L-methionine = plastoquinol-9 + S-adenosyl-L-homocysteine + H(+). The enzyme catalyses 6-geranylgeranyl-2-methylbenzene-1,4-diol + S-adenosyl-L-methionine = 6-geranylgeranyl-2,3-dimethylbenzene-1,4-diol + S-adenosyl-L-homocysteine + H(+). The protein operates within cofactor biosynthesis; tocopherol biosynthesis. Functionally, involved in a key methylation step in both tocopherols (vitamin E) and plastoquinone synthesis. Catalyzes the conversion of 2-methyl-6-phytyl-1,4-hydroquinone (MPBQ) to 2,3-dimethyl-6-phytyl-1,4-hydroquinone (DMPQ, a substrate for tocopherol cyclase), and 2-methyl-6-solanyl-1,4-benzoquinone (MSBQ) to plastoquinone. This Arabidopsis thaliana (Mouse-ear cress) protein is 2-methyl-6-phytyl-1,4-hydroquinone methyltransferase, chloroplastic (VTE3).